The chain runs to 156 residues: Interleukin-36 receptor antagonist protein (156 aa).

C9 and C155 are joined by a disulfide.

This sequence belongs to the IL-1 family. Interacts with cargo receptor TMED10; the interaction mediates the translocation from the cytoplasm into the ERGIC (endoplasmic reticulum-Golgi intermediate compartment) and thereby secretion. Removal of N-terminal methionine is necessary for full antagonistic activity. In terms of tissue distribution, highly abundant in embryonic tissue and tissues containing epithelial cells.

The protein localises to the cytoplasm. It localises to the secreted. In terms of biological role, inhibits the activity of interleukin-36 (IL36A,IL36B and IL36G) by binding to receptor IL1RL2/IL-36R and preventing its association with the coreceptor IL1RAP for signaling. Part of the IL-36 signaling system that is thought to be present in epithelial barriers and to take part in local inflammatory response; similar to the IL-1 system with which it shares the coreceptor. Proposed to play a role in skin inflammation. May be involved in the innate immune response to fungal pathogens. May activate an anti-inflammatory signaling pathway by recruiting SIGIRR. The chain is Interleukin-36 receptor antagonist protein from Mus musculus (Mouse).